The chain runs to 298 residues: Glutamyl-Q tRNA(Asp) synthetase (298 aa).

L-glutamate-binding positions include Arg-9–Ser-13 and Glu-45. The 'HIGH' region motif lies at Pro-12–Ser-22. Zn(2+) contacts are provided by Cys-101, Cys-103, Tyr-115, and Cys-119. Positions 172 and 190 each coordinate L-glutamate. Positions Lys-228 to Gln-232 match the 'KMSKS' region motif. Lys-231 contributes to the ATP binding site.

It belongs to the class-I aminoacyl-tRNA synthetase family. GluQ subfamily. Zn(2+) is required as a cofactor.

Catalyzes the tRNA-independent activation of glutamate in presence of ATP and the subsequent transfer of glutamate onto a tRNA(Asp). Glutamate is transferred on the 2-amino-5-(4,5-dihydroxy-2-cyclopenten-1-yl) moiety of the queuosine in the wobble position of the QUC anticodon. This chain is Glutamyl-Q tRNA(Asp) synthetase, found in Salmonella typhimurium (strain LT2 / SGSC1412 / ATCC 700720).